The primary structure comprises 196 residues: Probable phosphoheptose isomerase (196 aa).

The SIS domain maps to 43 to 196; that stretch reads IVNVFNSGGK…MICSVIDSYY (154 aa). Position 58-60 (58-60) interacts with substrate; the sequence is NGG. Zn(2+) is bound by residues His-67 and Glu-71. Substrate-binding positions include Glu-71, 100 to 101, 126 to 128, Ser-131, and Gln-178; these read ND and STS. Zn(2+) is bound by residues Gln-178 and His-186.

It belongs to the SIS family. GmhA subfamily. Zn(2+) serves as cofactor.

It localises to the cytoplasm. The catalysed reaction is 2 D-sedoheptulose 7-phosphate = D-glycero-alpha-D-manno-heptose 7-phosphate + D-glycero-beta-D-manno-heptose 7-phosphate. It participates in carbohydrate biosynthesis; D-glycero-D-manno-heptose 7-phosphate biosynthesis; D-glycero-alpha-D-manno-heptose 7-phosphate and D-glycero-beta-D-manno-heptose 7-phosphate from sedoheptulose 7-phosphate: step 1/1. In terms of biological role, catalyzes the isomerization of sedoheptulose 7-phosphate in D-glycero-D-manno-heptose 7-phosphate. In Thermoplasma volcanium (strain ATCC 51530 / DSM 4299 / JCM 9571 / NBRC 15438 / GSS1), this protein is Probable phosphoheptose isomerase.